We begin with the raw amino-acid sequence, 350 residues long: Anthranilate phosphoribosyltransferase (350 aa).

Residues Gly94, 97 to 98 (GD), Thr102, 104 to 107 (NIST), 122 to 130 (KHGNRAVSS), and Ser134 each bind 5-phospho-alpha-D-ribose 1-diphosphate. Gly94 contributes to the anthranilate binding site. Ser106 is a Mg(2+) binding site. An anthranilate-binding site is contributed by Asn125. Arg180 serves as a coordination point for anthranilate. 2 residues coordinate Mg(2+): Asp239 and Glu240.

This sequence belongs to the anthranilate phosphoribosyltransferase family. In terms of assembly, homodimer. Mg(2+) serves as cofactor.

It catalyses the reaction N-(5-phospho-beta-D-ribosyl)anthranilate + diphosphate = 5-phospho-alpha-D-ribose 1-diphosphate + anthranilate. Its pathway is amino-acid biosynthesis; L-tryptophan biosynthesis; L-tryptophan from chorismate: step 2/5. In terms of biological role, catalyzes the transfer of the phosphoribosyl group of 5-phosphorylribose-1-pyrophosphate (PRPP) to anthranilate to yield N-(5'-phosphoribosyl)-anthranilate (PRA). This is Anthranilate phosphoribosyltransferase from Geobacter sulfurreducens (strain ATCC 51573 / DSM 12127 / PCA).